Here is a 126-residue protein sequence, read N- to C-terminus: NADH-quinone oxidoreductase subunit A (126 aa).

Transmembrane regions (helical) follow at residues 11-31, 64-84, and 98-118; these read IAIQ…SSWL, FLVA…YPWA, and EGFV…IYVI.

Belongs to the complex I subunit 3 family. As to quaternary structure, NDH-1 is composed of 14 different subunits. Subunits NuoA, H, J, K, L, M, N constitute the membrane sector of the complex.

It localises to the cell inner membrane. The catalysed reaction is a quinone + NADH + 5 H(+)(in) = a quinol + NAD(+) + 4 H(+)(out). Its function is as follows. NDH-1 shuttles electrons from NADH, via FMN and iron-sulfur (Fe-S) centers, to quinones in the respiratory chain. The immediate electron acceptor for the enzyme in this species is believed to be a menaquinone. Couples the redox reaction to proton translocation (for every two electrons transferred, four hydrogen ions are translocated across the cytoplasmic membrane), and thus conserves the redox energy in a proton gradient. This chain is NADH-quinone oxidoreductase subunit A, found in Cytophaga hutchinsonii (strain ATCC 33406 / DSM 1761 / CIP 103989 / NBRC 15051 / NCIMB 9469 / D465).